The chain runs to 254 residues: Phosphate import ATP-binding protein PstB (254 aa).

Positions 7–249 (MVAESMSFYY…PREKQTEDYI (243 aa)) constitute an ABC transporter domain. Position 39–46 (39–46 (GPSGCGKS)) interacts with ATP.

Belongs to the ABC transporter superfamily. Phosphate importer (TC 3.A.1.7) family. The complex is composed of two ATP-binding proteins (PstB), two transmembrane proteins (PstC and PstA) and a solute-binding protein (PstS).

It is found in the cell inner membrane. The catalysed reaction is phosphate(out) + ATP + H2O = ADP + 2 phosphate(in) + H(+). Its function is as follows. Part of the ABC transporter complex PstSACB involved in phosphate import. Responsible for energy coupling to the transport system. The protein is Phosphate import ATP-binding protein PstB of Chlorobium chlorochromatii (strain CaD3).